The following is a 351-amino-acid chain: Phosphoribosylformylglycinamidine cyclo-ligase (351 aa).

The protein belongs to the AIR synthase family.

It is found in the cytoplasm. It catalyses the reaction 2-formamido-N(1)-(5-O-phospho-beta-D-ribosyl)acetamidine + ATP = 5-amino-1-(5-phospho-beta-D-ribosyl)imidazole + ADP + phosphate + H(+). It functions in the pathway purine metabolism; IMP biosynthesis via de novo pathway; 5-amino-1-(5-phospho-D-ribosyl)imidazole from N(2)-formyl-N(1)-(5-phospho-D-ribosyl)glycinamide: step 2/2. This Burkholderia pseudomallei (strain 1710b) protein is Phosphoribosylformylglycinamidine cyclo-ligase.